We begin with the raw amino-acid sequence, 339 residues long: DNA-directed RNA polymerase subunit alpha (339 aa).

Positions methionine 1–glutamate 233 are alpha N-terminal domain (alpha-NTD). Residues glycine 266–phenylalanine 339 form an alpha C-terminal domain (alpha-CTD) region.

The protein belongs to the RNA polymerase alpha chain family. In plastids the minimal PEP RNA polymerase catalytic core is composed of four subunits: alpha, beta, beta', and beta''. When a (nuclear-encoded) sigma factor is associated with the core the holoenzyme is formed, which can initiate transcription.

The protein resides in the plastid. The protein localises to the chloroplast. The enzyme catalyses RNA(n) + a ribonucleoside 5'-triphosphate = RNA(n+1) + diphosphate. In terms of biological role, DNA-dependent RNA polymerase catalyzes the transcription of DNA into RNA using the four ribonucleoside triphosphates as substrates. This chain is DNA-directed RNA polymerase subunit alpha, found in Psathyrostachys juncea (Russian wildrye).